A 252-amino-acid chain; its full sequence is H-2 class II histocompatibility antigen, A-F beta chain (252 aa).

Residues 1–16 (AAVVVLMVLSSPGTEG) form the signal peptide. Positions 17–109 (GNSERHFVSQ…VETPTSLRRL (93 aa)) are beta-1. The Extracellular portion of the chain corresponds to 17–213 (GNSERHFVSQ…RAQSESARSK (197 aa)). Disulfide bonds link cysteine 31–cysteine 93 and cysteine 132–cysteine 188. An N-linked (GlcNAc...) asparagine glycan is attached at asparagine 35. The beta-2 stretch occupies residues 110 to 203 (EQPNVVISLS…SLKSPITVEW (94 aa)). The Ig-like C1-type domain maps to 112–200 (PNVVISLSRT…EHPSLKSPIT (89 aa)). The segment at 204 to 213 (RAQSESARSK) is connecting peptide. Residues 214 to 234 (MLSGIGGCVLGVIFLGLGLFI) form a helical membrane-spanning segment. Residues 235–252 (RYRSQKGPRGPPPAGLLQ) lie on the Cytoplasmic side of the membrane.

It belongs to the MHC class II family. Post-translationally, ubiquitinated in immature dendritic cells leading to down-regulation of MHC class II.

It localises to the membrane. This chain is H-2 class II histocompatibility antigen, A-F beta chain (H2-Ab1), found in Mus musculus (Mouse).